Here is a 346-residue protein sequence, read N- to C-terminus: N-acetyl-gamma-glutamyl-phosphate reductase (346 aa).

Cysteine 154 is an active-site residue.

It belongs to the NAGSA dehydrogenase family. Type 1 subfamily.

It is found in the cytoplasm. The enzyme catalyses N-acetyl-L-glutamate 5-semialdehyde + phosphate + NADP(+) = N-acetyl-L-glutamyl 5-phosphate + NADPH + H(+). Its pathway is amino-acid biosynthesis; L-arginine biosynthesis; N(2)-acetyl-L-ornithine from L-glutamate: step 3/4. Its function is as follows. Catalyzes the NADPH-dependent reduction of N-acetyl-5-glutamyl phosphate to yield N-acetyl-L-glutamate 5-semialdehyde. The chain is N-acetyl-gamma-glutamyl-phosphate reductase from Rhodopirellula baltica (strain DSM 10527 / NCIMB 13988 / SH1).